Here is a 178-residue protein sequence, read N- to C-terminus: Protein GrpE (178 aa).

Positions 1–11 are enriched in pro residues; that stretch reads MSENQNPPPSP. The disordered stretch occupies residues 1-23; sequence MSENQNPPPSPEEIEAAMSANAA.

It belongs to the GrpE family. Homodimer.

The protein resides in the cytoplasm. In terms of biological role, participates actively in the response to hyperosmotic and heat shock by preventing the aggregation of stress-denatured proteins, in association with DnaK and GrpE. It is the nucleotide exchange factor for DnaK and may function as a thermosensor. Unfolded proteins bind initially to DnaJ; upon interaction with the DnaJ-bound protein, DnaK hydrolyzes its bound ATP, resulting in the formation of a stable complex. GrpE releases ADP from DnaK; ATP binding to DnaK triggers the release of the substrate protein, thus completing the reaction cycle. Several rounds of ATP-dependent interactions between DnaJ, DnaK and GrpE are required for fully efficient folding. In Acidovorax sp. (strain JS42), this protein is Protein GrpE.